A 493-amino-acid polypeptide reads, in one-letter code: 3-octaprenyl-4-hydroxybenzoate carboxy-lyase (493 aa).

Asn-172 provides a ligand contact to Mn(2+). Prenylated FMN-binding positions include 175-177 (IYR), 189-191 (RWL), and 194-195 (RG). Glu-238 provides a ligand contact to Mn(2+). The active-site Proton donor is Asp-287.

It belongs to the UbiD family. In terms of assembly, homohexamer. Prenylated FMN serves as cofactor. The cofactor is Mn(2+).

The protein localises to the cell membrane. It catalyses the reaction a 4-hydroxy-3-(all-trans-polyprenyl)benzoate + H(+) = a 2-(all-trans-polyprenyl)phenol + CO2. It functions in the pathway cofactor biosynthesis; ubiquinone biosynthesis. Functionally, catalyzes the decarboxylation of 3-octaprenyl-4-hydroxy benzoate to 2-octaprenylphenol, an intermediate step in ubiquinone biosynthesis. The sequence is that of 3-octaprenyl-4-hydroxybenzoate carboxy-lyase from Shewanella baltica (strain OS155 / ATCC BAA-1091).